Here is a 260-residue protein sequence, read N- to C-terminus: MATPPKRSCPSPAASSEGTRIKKISIEGNIAAGKSTFVNILKQVCEDWEVVPEPVARWCNVQSTQDEFEELTTSQKSGGNVLQMMYEKPERWSFTFQSYACLSRIRAQLAALNGKLKDAEKPVLFFERSVYSDRYIFASNLYESDCMNETEWTIYQDWHDWMNNQFGQSLELDGIIYLRATPEKCLNRIYLRGRNEEQGIPLEYLEKLHYKHESWLLHRTLKTNFDYLQEVPILTLDVNEDFKDKHDSLIEKVKDFLSTL.

Phosphoserine; by CK1 is present on residues S11 and S15. An ATP-binding site is contributed by 28 to 36 (GNIAAGKST). E53 contacts substrate. Residue T72 is modified to Phosphothreonine; by CK1. S74 is subject to Phosphoserine; by CK1. Residues Y86 and Q97 each contribute to the substrate site. E127 (proton acceptor) is an active-site residue. 2 residues coordinate substrate: R128 and D133. 188 to 192 (RIYLR) serves as a coordination point for ATP. E197 lines the substrate pocket. 240–242 (EDF) provides a ligand contact to ATP.

This sequence belongs to the DCK/DGK family. As to quaternary structure, homodimer. In terms of processing, phosphorylated and activated in vitro upon phosphorylation at Ser-74 by CSNK1D/CK1.

The protein localises to the nucleus. It catalyses the reaction 2'-deoxycytidine + a ribonucleoside 5'-triphosphate = dCMP + a ribonucleoside 5'-diphosphate + H(+). The catalysed reaction is 2'-deoxyadenosine + ATP = dAMP + ADP + H(+). It carries out the reaction 2'-deoxyguanosine + ATP = dGMP + ADP + H(+). Its function is as follows. Phosphorylates the deoxyribonucleosides deoxycytidine, deoxyguanosine and deoxyadenosine. The protein is Deoxycytidine kinase (DCK) of Bos taurus (Bovine).